A 107-amino-acid polypeptide reads, in one-letter code: Mitochondrial pyruvate carrier 1 (107 aa).

Transmembrane regions (helical) follow at residues 18 to 39 (YFMS…AALA) and 52 to 68 (MTLA…RFAY).

The protein belongs to the mitochondrial pyruvate carrier (MPC) (TC 2.A.105) family. As to quaternary structure, the functional 150 kDa pyruvate import complex is a heteromer of MPC1 and MPC2.

The protein resides in the mitochondrion inner membrane. Mediates the uptake of pyruvate into mitochondria. The polypeptide is Mitochondrial pyruvate carrier 1 (Mpc1) (Drosophila melanogaster (Fruit fly)).